The primary structure comprises 817 residues: MHKHQHCCKCPECYEVTRLAALRRLEPPGYGDWQVPDPYGPGGGNGASAGYGGYSSQTLPSQAGATPTPRTKAKLIPTGRDVGPVPPKPVPGKSTPKLNGSGPSWWPECTCTNRDWYEQVNGSDGMFKYEEIVLERGNSGLGFSIAGGIDNPHVPDDPGIFITKIIPGGAAAMDGRLGVNDCVLRVNEVDVSEVVHSRAVEALKEAGPVVRLVVRRRQPPPETIMEVNLLKGPKGLGFSIAGGIGNQHIPGDNSIYITKIIEGGAAQKDGRLQIGDRLLAVNNTNLQDVRHEEAVASLKNTSDMVYLKVAKPGSLHLNDMYAPPDYASTFTALADNHISHNSSLGYLGAVESKVSYPAPPQVPPTRYSPIPRHMLAEEDFTREPRKIILHKGSTGLGFNIVGGEDGEGIFVSFILAGGPADLSGELRRGDRILSVNGVNLRNATHEQAAAALKRAGQSVTIVAQYRPEEYSRFESKIHDLREQMMNSSMSSGSGSLRTSEKRSLYVRALFDYDRTRDSCLPSQGLSFSYGDILHVINASDDEWWQARLVTPHGESEQIGVIPSKKRVEKKERARLKTVKFHARTGMIESNRDFPGLSDDYYGAKNLKGQEDAILSYEPVTRQEIHYARPVIILGPMKDRVNDDLISEFPHKFGSCVPHTTRPRRDNEVDGQDYHFVVSREQMEKDIQDNKFIEAGQFNDNLYGTSIQSVRAVAERGKHCILDVSGNAIKRLQQAQLYPIAIFIKPKSIEALMEMNRRQTYEQANKIYDKAMKLEQEFGEYFTAIVQGDSLEEIYNKIKQIIEDQSGHYIWVPSPEKL.

N-acetylmethionine occurs at positions 1 and 2. Residues 33 to 101 (WQVPDPYGPG…GKSTPKLNGS (69 aa)) are disordered. Residues 40-53 (GPGGGNGASAGYGG) show a composition bias toward gly residues. Residues 57–69 (QTLPSQAGATPTP) show a composition bias toward polar residues. 3 consecutive PDZ domains span residues 130–217 (EEIV…VRRR), 226–311 (EVNL…KVAK), and 379–465 (DFTR…VAQY). Ser139 bears the Phosphoserine mark. Residues 501–571 (KRSLYVRALF…PSKKRVEKKE (71 aa)) form the SH3 domain. The region spanning 627–802 (ARPVIILGPM…IYNKIKQIIE (176 aa)) is the Guanylate kinase-like domain. Phosphotyrosine is present on Tyr673.

This sequence belongs to the MAGUK family. As to quaternary structure, interacts through its PDZ domains with NETO1, GRIN2B and SYNGAP1. Interacts through its guanylate kinase-like domain with DLGAP1, DLGAP2, DLGAP3 and DLGAP4. Interacts with FLTP/C1orf192. Interacts through its PDZ domains with APC. Interacts through its first two PDZ domains with ERBB4. Interacts through its third PDZ domain with NLGN1, and probably with NLGN2 and NLGN3. Interacts with FRMPD4 (via C-terminus). Interacts with LRFN1, LRFN2 and LRFN4. Interacts with DGKI (via PDZ-binding motif).

Required for learning most likely through its role in synaptic plasticity following NMDA receptor signaling. The chain is Disks large homolog 3 (DLG3) from Homo sapiens (Human).